The following is a 258-amino-acid chain: 4-oxalmesaconate hydratase (258 aa).

Zn(2+)-binding residues include His-28, Asp-31, and His-141.

Belongs to the MshB deacetylase family. Zn(2+) serves as cofactor.

It carries out the reaction 2-hydroxy-4-oxobutane-1,2,4-tricarboxylate = 4-carboxy-2-hydroxy-cis,cis-muconate + H2O. Its function is as follows. Catalyzes the conversion of oxalomesaconic acid enol (OMAenol) to 4-carboxy-4-hydroxy-2-oxoadipic acid (CHA). Mediates the third step of gallate degradation pathway. This Pseudomonas putida (strain ATCC 47054 / DSM 6125 / CFBP 8728 / NCIMB 11950 / KT2440) protein is 4-oxalmesaconate hydratase (galB).